Reading from the N-terminus, the 300-residue chain is MNIILEILLLLITIIYSYLESLVKFFIPQRRKSVAGEIVLITGAGHGIGRQTTYEFAKRQSILVLWDINKRGVEETAAECRKLGVTAHAYVVDCSNREEIYRSLNQVKKEVGDVTIVVNNAGTVYPADLLSTKDEEITKTFEVNILGHFWITKALLPSMMERNHGHIVTVASVCGHEGIPYLIPYCSSKFAAVGFHRGLTSELQALGKTGIKTSCLCPVFVNTGFTKNPSTRLWPVLETDEVVRSLIDGILTNKKMIFVPSYINIFLRLQKFLPERASAILNRMQNIQFEAVVGHKIKMK.

The first 19 residues, 1 to 19, serve as a signal peptide directing secretion; the sequence is MNIILEILLLLITIIYSYL. Residue Ser-33 is modified to Phosphoserine. Residue 40–67 coordinates NAD(+); sequence LITGAGHGIGRQTTYEFAKRQSILVLWD. Ser-172 serves as a coordination point for substrate. The active-site Proton acceptor is Tyr-185. An NAD(+)-binding site is contributed by Lys-189.

Belongs to the short-chain dehydrogenases/reductases (SDR) family. As to expression, highly expressed in the liver. Also detected in ovary, bone marrow, kidney, brain, lung, skeletal muscle, bladder and testis.

Its subcellular location is the lipid droplet. It localises to the endoplasmic reticulum. The protein localises to the cytoplasm. The enzyme catalyses 17beta-estradiol + NAD(+) = estrone + NADH + H(+). It carries out the reaction all-trans-retinol + NAD(+) = all-trans-retinal + NADH + H(+). It catalyses the reaction all-trans-retinal + NAD(+) + H2O = all-trans-retinoate + NADH + 2 H(+). Functionally, plays a pivotal role in hepatic lipid metabolism. In vitro, it catalyzes the oxidation of a variety of lipid substrates, including 17beta-estradiol, retinol, retinal, and leukotriene B4. Has retinol/retinal dehydrogenase activity in vitro. Its function is as follows. Does not have retinol/retinal dehydrogenase activity in vitro. The chain is 17-beta-hydroxysteroid dehydrogenase 13 from Homo sapiens (Human).